Consider the following 390-residue polypeptide: Alkanesulfonate monooxygenase 1 (390 aa).

The tract at residues 364–390 (TGSSVNTGPFGETIAGDHRPKSLASAS) is disordered.

The protein belongs to the SsuD family.

The catalysed reaction is an alkanesulfonate + FMNH2 + O2 = an aldehyde + FMN + sulfite + H2O + 2 H(+). Functionally, catalyzes the desulfonation of aliphatic sulfonates. The polypeptide is Alkanesulfonate monooxygenase 1 (ssuD1) (Mesorhizobium japonicum (strain LMG 29417 / CECT 9101 / MAFF 303099) (Mesorhizobium loti (strain MAFF 303099))).